The chain runs to 616 residues: Proline dehydrogenase 1, mitochondrial (616 aa).

Belongs to the proline oxidase family. Requires FAD as cofactor.

The protein localises to the mitochondrion matrix. The catalysed reaction is L-proline + a quinone = (S)-1-pyrroline-5-carboxylate + a quinol + H(+). It functions in the pathway amino-acid degradation; L-proline degradation into L-glutamate; L-glutamate from L-proline: step 1/2. Functionally, converts proline to delta-1-pyrroline-5-carboxylate. Through proline catabolism, promotes reactive oxygen species (ROS) production and the transcription of skn-1 target genes in response to bacterial infection by P.aeruginosa. The chain is Proline dehydrogenase 1, mitochondrial from Caenorhabditis elegans.